A 282-amino-acid chain; its full sequence is MSTPQLVLPAPAKLNLMLHILGRRPDGYHELQTLFQFLDYGDELGFSVREDGEIHLQTDVPGVPHDSNLIVKAARALQQQSGCTLGMDIWLEKRLPMGGGIGGGSSDAATTLLALNHLWQLGWDEDRLAQLGLTLGADVPVFVRGHAAFAEGVGEILTPVDPEEPWYLVLVPQVSVSTAEIFSDPLLTRDTPPIKVRPVPKGNSRNDCKAVVERRYPEVRNALNLLGKFTEAKLTGTGSCVFGAFPNKAEADKVSALLTETLTGFVAKGSNISMLHRKLQIL.

Residue K13 is part of the active site. 96–106 (PMGGGIGGGSS) provides a ligand contact to ATP. The active site involves D138.

Belongs to the GHMP kinase family. IspE subfamily.

It carries out the reaction 4-CDP-2-C-methyl-D-erythritol + ATP = 4-CDP-2-C-methyl-D-erythritol 2-phosphate + ADP + H(+). It functions in the pathway isoprenoid biosynthesis; isopentenyl diphosphate biosynthesis via DXP pathway; isopentenyl diphosphate from 1-deoxy-D-xylulose 5-phosphate: step 3/6. Catalyzes the phosphorylation of the position 2 hydroxy group of 4-diphosphocytidyl-2C-methyl-D-erythritol. The polypeptide is 4-diphosphocytidyl-2-C-methyl-D-erythritol kinase (Pseudomonas syringae pv. syringae (strain B728a)).